We begin with the raw amino-acid sequence, 150 residues long: D-aminoacyl-tRNA deacylase (150 aa).

The short motif at 138–139 (GP) is the Gly-cisPro motif, important for rejection of L-amino acids element.

This sequence belongs to the DTD family. Homodimer.

The protein resides in the cytoplasm. It carries out the reaction glycyl-tRNA(Ala) + H2O = tRNA(Ala) + glycine + H(+). It catalyses the reaction a D-aminoacyl-tRNA + H2O = a tRNA + a D-alpha-amino acid + H(+). Its function is as follows. An aminoacyl-tRNA editing enzyme that deacylates mischarged D-aminoacyl-tRNAs. Also deacylates mischarged glycyl-tRNA(Ala), protecting cells against glycine mischarging by AlaRS. Acts via tRNA-based rather than protein-based catalysis; rejects L-amino acids rather than detecting D-amino acids in the active site. By recycling D-aminoacyl-tRNA to D-amino acids and free tRNA molecules, this enzyme counteracts the toxicity associated with the formation of D-aminoacyl-tRNA entities in vivo and helps enforce protein L-homochirality. The polypeptide is D-aminoacyl-tRNA deacylase (Bacteroides fragilis (strain ATCC 25285 / DSM 2151 / CCUG 4856 / JCM 11019 / LMG 10263 / NCTC 9343 / Onslow / VPI 2553 / EN-2)).